We begin with the raw amino-acid sequence, 50 residues long: U2-ctenitoxin-Pk1a (50 aa).

Intrachain disulfides connect C1–C15, C8–C21, C12–C47, C14–C31, and C23–C29.

As to expression, expressed by the venom gland.

Its subcellular location is the secreted. Functionally, insecticidal neurotoxin that reversibly inhibits the N-methyl-D-aspartate (NMDA)-subtype of ionotropic glutamate receptor (GRIN) and inhibits inactivation of insect sodium channels (Nav). In vivo, is highly toxic to insects. This chain is U2-ctenitoxin-Pk1a, found in Phoneutria keyserlingi (Brazilian wandering spider).